A 508-amino-acid chain; its full sequence is Histone acetyltransferase type B catalytic subunit (508 aa).

Interaction with histone H4 N-terminus regions lie at residues 44–46 (EKE) and 207–209 (YRY). Acetyl-CoA is bound by residues 249–251 (FII) and 256–262 (QQKGLGS). Glu-284 functions as the Proton donor/acceptor in the catalytic mechanism. 2 disordered regions span residues 364–399 (SVRP…PTPE) and 461–508 (QADG…SGHA). Over residues 387–399 (KGHEKALPKPTPE) the composition is skewed to basic and acidic residues.

This sequence belongs to the HAT1 family. In terms of assembly, component of the HAT-B complex composed of at least hat-1 and hat-2. The HAT-B complex binds to histone H4 tail.

The protein localises to the cytoplasm. Its subcellular location is the nucleus. It catalyses the reaction L-lysyl-[protein] + acetyl-CoA = N(6)-acetyl-L-lysyl-[protein] + CoA + H(+). Functionally, catalytic component of the histone acetylase B (HAT-B) complex. Acetylates 'Lys-12' of histone H4 which is required for telomeric silencing. Has intrinsic substrate specificity that modifies lysine in recognition sequence GXGKXG. Involved in DNA double-strand break repair. The protein is Histone acetyltransferase type B catalytic subunit (hat-1) of Neurospora crassa (strain ATCC 24698 / 74-OR23-1A / CBS 708.71 / DSM 1257 / FGSC 987).